Reading from the N-terminus, the 259-residue chain is Phosphatidylserine decarboxylase proenzyme (259 aa).

The active-site Schiff-base intermediate with substrate; via pyruvic acid is the serine 183. Serine 183 carries the post-translational modification Pyruvic acid (Ser); by autocatalysis.

The protein belongs to the phosphatidylserine decarboxylase family. PSD-A subfamily. In terms of assembly, heterodimer of a large membrane-associated beta subunit and a small pyruvoyl-containing alpha subunit. It depends on pyruvate as a cofactor. Is synthesized initially as an inactive proenzyme. Formation of the active enzyme involves a self-maturation process in which the active site pyruvoyl group is generated from an internal serine residue via an autocatalytic post-translational modification. Two non-identical subunits are generated from the proenzyme in this reaction, and the pyruvate is formed at the N-terminus of the alpha chain, which is derived from the carboxyl end of the proenzyme. The post-translation cleavage follows an unusual pathway, termed non-hydrolytic serinolysis, in which the side chain hydroxyl group of the serine supplies its oxygen atom to form the C-terminus of the beta chain, while the remainder of the serine residue undergoes an oxidative deamination to produce ammonia and the pyruvoyl prosthetic group on the alpha chain.

It localises to the cell membrane. The enzyme catalyses a 1,2-diacyl-sn-glycero-3-phospho-L-serine + H(+) = a 1,2-diacyl-sn-glycero-3-phosphoethanolamine + CO2. It functions in the pathway phospholipid metabolism; phosphatidylethanolamine biosynthesis; phosphatidylethanolamine from CDP-diacylglycerol: step 2/2. In terms of biological role, catalyzes the formation of phosphatidylethanolamine (PtdEtn) from phosphatidylserine (PtdSer). The protein is Phosphatidylserine decarboxylase proenzyme of Neisseria gonorrhoeae (strain NCCP11945).